The primary structure comprises 900 residues: Trehalose-phosphatase (900 aa).

2 disordered regions span residues 76 to 109 (SRLFNSKNRDKSENGEKGENDLHAKEEREKEEDP) and 874 to 900 (VKHSDSSIRSEQASARYAMKRQQSYKN). The segment covering 82 to 108 (KNRDKSENGEKGENDLHAKEEREKEED) has biased composition (basic and acidic residues).

In the C-terminal section; belongs to the trehalose phosphatase family. This sequence in the N-terminal section; belongs to the glycosyltransferase 20 family. Requires Mg(2+) as cofactor.

The catalysed reaction is alpha,alpha-trehalose 6-phosphate + H2O = alpha,alpha-trehalose + phosphate. It functions in the pathway carbohydrate biosynthesis. Its function is as follows. Phosphatase catalytic subunit of the trehalose synthase complex that catalyzes the production of trehalose from glucose-6-phosphate and UDP-alpha-D-glucose in a two step process. In Zygosaccharomyces rouxii, this protein is Trehalose-phosphatase.